We begin with the raw amino-acid sequence, 117 residues long: DNA-binding protein RdgB (117 aa).

The segment at residues 82 to 102 (NHSALAKKYNVSLQWIYKIVR) is a DNA-binding region (H-T-H motif).

The protein belongs to the c/mor transcriptional regulatory family.

Regulates pectin lyase production in response to DNA damage. The sequence is that of DNA-binding protein RdgB (rdgB) from Pectobacterium carotovorum subsp. carotovorum (Erwinia carotovora subsp. carotovora).